An 84-amino-acid polypeptide reads, in one-letter code: Small ribosomal subunit protein uS17 (84 aa).

It belongs to the universal ribosomal protein uS17 family. As to quaternary structure, part of the 30S ribosomal subunit.

Its function is as follows. One of the primary rRNA binding proteins, it binds specifically to the 5'-end of 16S ribosomal RNA. The sequence is that of Small ribosomal subunit protein uS17 from Vibrio atlanticus (strain LGP32) (Vibrio splendidus (strain Mel32)).